Reading from the N-terminus, the 441-residue chain is 4-hydroxy-3-methylbut-2-en-1-yl diphosphate synthase (flavodoxin) (441 aa).

Residues Cys-320, Cys-323, Cys-366, and Glu-373 each contribute to the [4Fe-4S] cluster site.

Belongs to the IspG family. Requires [4Fe-4S] cluster as cofactor.

It catalyses the reaction (2E)-4-hydroxy-3-methylbut-2-enyl diphosphate + oxidized [flavodoxin] + H2O + 2 H(+) = 2-C-methyl-D-erythritol 2,4-cyclic diphosphate + reduced [flavodoxin]. It participates in isoprenoid biosynthesis; isopentenyl diphosphate biosynthesis via DXP pathway; isopentenyl diphosphate from 1-deoxy-D-xylulose 5-phosphate: step 5/6. In terms of biological role, converts 2C-methyl-D-erythritol 2,4-cyclodiphosphate (ME-2,4cPP) into 1-hydroxy-2-methyl-2-(E)-butenyl 4-diphosphate. This is 4-hydroxy-3-methylbut-2-en-1-yl diphosphate synthase (flavodoxin) from Rhodopseudomonas palustris (strain ATCC BAA-98 / CGA009).